A 132-amino-acid polypeptide reads, in one-letter code: Large ribosomal subunit protein uL14 (132 aa).

It belongs to the universal ribosomal protein uL14 family. In terms of assembly, part of the 50S ribosomal subunit. Forms a cluster with proteins L3 and L24e, part of which may contact the 16S rRNA in 2 intersubunit bridges.

Functionally, binds to 23S rRNA. Forms part of two intersubunit bridges in the 70S ribosome. The polypeptide is Large ribosomal subunit protein uL14 (Thermoplasma acidophilum (strain ATCC 25905 / DSM 1728 / JCM 9062 / NBRC 15155 / AMRC-C165)).